A 103-amino-acid polypeptide reads, in one-letter code: MATQNIRIRLKAFDHRLIDQSAREITETAKRTGAQVKGPIPMPTRKERFTVLVSPHVNKDARDQYEIRTHKRLLDIVDPTDKTVDALMKLDLAAGVDVQLELR.

This sequence belongs to the universal ribosomal protein uS10 family. Part of the 30S ribosomal subunit.

Its function is as follows. Involved in the binding of tRNA to the ribosomes. The chain is Small ribosomal subunit protein uS10 from Hydrogenovibrio crunogenus (strain DSM 25203 / XCL-2) (Thiomicrospira crunogena).